The chain runs to 542 residues: CTP synthase (542 aa).

The segment at 1–265 (MTRYVFITGG…DREVLGHFGL (265 aa)) is amidoligase domain. Ser-13 contacts CTP. Ser-13 serves as a coordination point for UTP. ATP is bound by residues 14 to 19 (SLGKGL) and Asp-71. Mg(2+) is bound by residues Asp-71 and Glu-139. Residues 146–148 (DIE), 186–191 (KTKPTQ), and Lys-222 each bind CTP. UTP is bound by residues 186–191 (KTKPTQ) and Lys-222. The 251-residue stretch at 291–541 (SIAIVGKYTG…VGAAIEQSRL (251 aa)) folds into the Glutamine amidotransferase type-1 domain. Gly-353 is an L-glutamine binding site. Cys-380 serves as the catalytic Nucleophile; for glutamine hydrolysis. L-glutamine-binding positions include 381–384 (FGMQ), Glu-404, and Arg-469. Active-site residues include His-514 and Glu-516.

It belongs to the CTP synthase family. Homotetramer.

The catalysed reaction is UTP + L-glutamine + ATP + H2O = CTP + L-glutamate + ADP + phosphate + 2 H(+). It catalyses the reaction L-glutamine + H2O = L-glutamate + NH4(+). It carries out the reaction UTP + NH4(+) + ATP = CTP + ADP + phosphate + 2 H(+). It participates in pyrimidine metabolism; CTP biosynthesis via de novo pathway; CTP from UDP: step 2/2. Its activity is regulated as follows. Allosterically activated by GTP, when glutamine is the substrate; GTP has no effect on the reaction when ammonia is the substrate. The allosteric effector GTP functions by stabilizing the protein conformation that binds the tetrahedral intermediate(s) formed during glutamine hydrolysis. Inhibited by the product CTP, via allosteric rather than competitive inhibition. Its function is as follows. Catalyzes the ATP-dependent amination of UTP to CTP with either L-glutamine or ammonia as the source of nitrogen. Regulates intracellular CTP levels through interactions with the four ribonucleotide triphosphates. In Methylobacterium radiotolerans (strain ATCC 27329 / DSM 1819 / JCM 2831 / NBRC 15690 / NCIMB 10815 / 0-1), this protein is CTP synthase.